The sequence spans 128 residues: Entry-fusion complex protein OPG094 (128 aa).

The Intravirion segment spans residues 1–30 (MENVPNVYFNPVFIEPTFKHSLLSVYKHRL). A helical; Signal-anchor for type III membrane protein membrane pass occupies residues 31–51 (IVLFEVFIVFILIYVFFRSEL). Over 52-107 (NMFFMPKRKIPDPIDRLRRANLACEDDKLMIYGLPWMTTQTSALSINSKPIVYKDC) the chain is Virion surface. The cysteines at positions 75 and 107 are disulfide-linked.

This sequence belongs to the orthopoxvirus OPG099 family. As to quaternary structure, interacts with OPG086. Component of the entry fusion complex (EFC) composed of OPG053, OPG076, OPG086, OPG094, OPG095, OPG099, OPG107, OPG143, OPG104J5, OPG147 and OPG155. Except for OPG095 and OPG053, each of the EFC proteins is required for assembly or stability of the complex. Most cysteines are linked by disulfide bonds. They are created by the viral disulfide bond formation pathway, a poxvirus-specific redox pathway that operates on the cytoplasmic side of the MV membranes. Post-translationally, unglycosylated because produced in viral factories instead of the classic ER -Golgi route.

It localises to the virion membrane. Functionally, component of the entry fusion complex (EFC), which consists of 11 proteins. During cell infection, this complex mediates entry of the virion core into the host cytoplasm by a two-step mechanism consisting of lipid mixing of the viral and cellular membranes and subsequent pore formation. This chain is Entry-fusion complex protein OPG094 (OPG099), found in Vaccinia virus (strain Ankara) (VACV).